Consider the following 311-residue polypeptide: tRNA-cytidine(32) 2-sulfurtransferase (311 aa).

A PP-loop motif motif is present at residues 47 to 52; sequence SGGKDS. 3 residues coordinate [4Fe-4S] cluster: cysteine 122, cysteine 125, and cysteine 213.

It belongs to the TtcA family. As to quaternary structure, homodimer. Mg(2+) serves as cofactor. Requires [4Fe-4S] cluster as cofactor.

The protein resides in the cytoplasm. It carries out the reaction cytidine(32) in tRNA + S-sulfanyl-L-cysteinyl-[cysteine desulfurase] + AH2 + ATP = 2-thiocytidine(32) in tRNA + L-cysteinyl-[cysteine desulfurase] + A + AMP + diphosphate + H(+). The protein operates within tRNA modification. Catalyzes the ATP-dependent 2-thiolation of cytidine in position 32 of tRNA, to form 2-thiocytidine (s(2)C32). The sulfur atoms are provided by the cysteine/cysteine desulfurase (IscS) system. This chain is tRNA-cytidine(32) 2-sulfurtransferase, found in Citrobacter koseri (strain ATCC BAA-895 / CDC 4225-83 / SGSC4696).